Consider the following 566-residue polypeptide: uncharacterized protein (566 aa).

Belongs to the protein kinase superfamily. ADCK protein kinase family.

This is an uncharacterized protein from Synechocystis sp. (strain ATCC 27184 / PCC 6803 / Kazusa).